A 120-amino-acid chain; its full sequence is Large ribosomal subunit protein uL18 (120 aa).

This sequence belongs to the universal ribosomal protein uL18 family. Part of the 50S ribosomal subunit; part of the 5S rRNA/L5/L18/L25 subcomplex. Contacts the 5S and 23S rRNAs.

This is one of the proteins that bind and probably mediate the attachment of the 5S RNA into the large ribosomal subunit, where it forms part of the central protuberance. The chain is Large ribosomal subunit protein uL18 from Methylocella silvestris (strain DSM 15510 / CIP 108128 / LMG 27833 / NCIMB 13906 / BL2).